Here is a 292-residue protein sequence, read N- to C-terminus: Triplex capsid protein 2 (292 aa).

This sequence belongs to the herpesviridae TRX2 protein family. In terms of assembly, interacts with TRX1 and major capisd protein/MCP.

It localises to the virion. The protein localises to the host nucleus. Structural component of the T=16 icosahedral capsid. The capsid is composed of pentamers and hexamers of major capsid protein/MCP, which are linked together by heterotrimers called triplexes. These triplexes are formed by a single molecule of triplex protein 1/TRX1 and two copies of triplex protein 2/TRX2. Additionally, TRX1 is required for efficient transport of TRX2 to the nucleus, which is the site of capsid assembly. The sequence is that of Triplex capsid protein 2 from Elephas maximus (Indian elephant).